The chain runs to 500 residues: Probable cytosol aminopeptidase (500 aa).

Residues lysine 264 and aspartate 269 each coordinate Mn(2+). Residue lysine 276 is part of the active site. Residues aspartate 287, aspartate 346, and glutamate 348 each contribute to the Mn(2+) site. Arginine 350 is an active-site residue.

Belongs to the peptidase M17 family. The cofactor is Mn(2+).

Its subcellular location is the cytoplasm. It carries out the reaction Release of an N-terminal amino acid, Xaa-|-Yaa-, in which Xaa is preferably Leu, but may be other amino acids including Pro although not Arg or Lys, and Yaa may be Pro. Amino acid amides and methyl esters are also readily hydrolyzed, but rates on arylamides are exceedingly low.. The enzyme catalyses Release of an N-terminal amino acid, preferentially leucine, but not glutamic or aspartic acids.. Functionally, presumably involved in the processing and regular turnover of intracellular proteins. Catalyzes the removal of unsubstituted N-terminal amino acids from various peptides. This chain is Probable cytosol aminopeptidase, found in Chlamydia felis (strain Fe/C-56) (Chlamydophila felis).